We begin with the raw amino-acid sequence, 98 residues long: DNA-binding protein Fis (98 aa).

Positions 74-93 form a DNA-binding region, H-T-H motif; sequence QTRAATMLGINRGTLRKKLK.

It belongs to the transcriptional regulatory Fis family. Homodimer.

Its function is as follows. Activates ribosomal RNA transcription. Plays a direct role in upstream activation of rRNA promoters. In Histophilus somni (strain 2336) (Haemophilus somnus), this protein is DNA-binding protein Fis.